Consider the following 155-residue polypeptide: Regulatory protein RecX (155 aa).

This sequence belongs to the RecX family.

It is found in the cytoplasm. In terms of biological role, modulates RecA activity. The sequence is that of Regulatory protein RecX from Pseudomonas fluorescens (strain ATCC BAA-477 / NRRL B-23932 / Pf-5).